A 104-amino-acid polypeptide reads, in one-letter code: uncharacterized protein (104 aa).

2 consecutive transmembrane segments (helical) span residues 53-73 (IWGI…NWDF) and 74-94 (ILNL…LILI).

Its subcellular location is the cell membrane. This is an uncharacterized protein from Methanocaldococcus jannaschii (strain ATCC 43067 / DSM 2661 / JAL-1 / JCM 10045 / NBRC 100440) (Methanococcus jannaschii).